A 254-amino-acid polypeptide reads, in one-letter code: Agamous-like MADS-box protein AGL9 homolog (254 aa).

The MADS-box domain maps to arginine 3–phenylalanine 57. In terms of domain architecture, K-box spans glutamate 91–methionine 181.

Its subcellular location is the nucleus. Functionally, probable transcription factor active in inflorescence development and floral organogenesis. The chain is Agamous-like MADS-box protein AGL9 homolog (AGL9) from Sinapis alba (White mustard).